Reading from the N-terminus, the 123-residue chain is Ribosome-binding factor A (123 aa).

This sequence belongs to the RbfA family. As to quaternary structure, monomer. Binds 30S ribosomal subunits, but not 50S ribosomal subunits or 70S ribosomes.

The protein resides in the cytoplasm. One of several proteins that assist in the late maturation steps of the functional core of the 30S ribosomal subunit. Associates with free 30S ribosomal subunits (but not with 30S subunits that are part of 70S ribosomes or polysomes). Required for efficient processing of 16S rRNA. May interact with the 5'-terminal helix region of 16S rRNA. This chain is Ribosome-binding factor A, found in Lactobacillus johnsonii (strain CNCM I-12250 / La1 / NCC 533).